A 217-amino-acid chain; its full sequence is Superoxide dismutase [Cu-Zn], chloroplastic (217 aa).

A chloroplast-targeting transit peptide spans 1–63 (MAAHSIFTTT…TTPKPLTVFA (63 aa)). Cu cation contacts are provided by H109, H111, and H126. C120 and C209 are disulfide-bonded. Zn(2+) contacts are provided by H126, H134, H143, and D146. Cu cation is bound at residue H183.

This sequence belongs to the Cu-Zn superoxide dismutase family. In terms of assembly, homotetramer. The cofactor is Cu cation. Zn(2+) is required as a cofactor.

It is found in the plastid. It localises to the chloroplast. The enzyme catalyses 2 superoxide + 2 H(+) = H2O2 + O2. Destroys radicals which are normally produced within the cells and which are toxic to biological systems. In Solanum lycopersicum (Tomato), this protein is Superoxide dismutase [Cu-Zn], chloroplastic (SODCP.2).